Reading from the N-terminus, the 107-residue chain is Frataxin (107 aa).

This sequence belongs to the frataxin family. As to quaternary structure, monomer.

It localises to the cytoplasm. Functionally, promotes the assembly and repair of iron-sulfur clusters by delivering Fe(2+) to proteins involved in these pathways. This is Frataxin (YFH1) from Trachipleistophora hominis (Microsporidian parasite).